A 600-amino-acid chain; its full sequence is Chaperone protein DnaK (600 aa).

Residue Thr175 is modified to Phosphothreonine; by autocatalysis. Residues 572–600 form a disordered region; that stretch reads FAQQTQQQDPNNQKDDVTEATVTDDSTKK. Positions 591–600 are enriched in polar residues; the sequence is ATVTDDSTKK.

The protein belongs to the heat shock protein 70 family.

In terms of biological role, acts as a chaperone. The chain is Chaperone protein DnaK from Ureaplasma urealyticum serovar 10 (strain ATCC 33699 / Western).